The chain runs to 192 residues: Glycerol-3-phosphate acyltransferase (192 aa).

5 helical membrane passes run 1–21, 51–71, 78–98, 112–132, and 155–175; these read MTSA…GVLL, LGAV…VLAV, PTVH…PVWL, VLLV…VAVF, and LTAR…LMLW.

Belongs to the PlsY family. Probably interacts with PlsX.

Its subcellular location is the cell inner membrane. It catalyses the reaction an acyl phosphate + sn-glycerol 3-phosphate = a 1-acyl-sn-glycero-3-phosphate + phosphate. The protein operates within lipid metabolism; phospholipid metabolism. Catalyzes the transfer of an acyl group from acyl-phosphate (acyl-PO(4)) to glycerol-3-phosphate (G3P) to form lysophosphatidic acid (LPA). This enzyme utilizes acyl-phosphate as fatty acyl donor, but not acyl-CoA or acyl-ACP. The polypeptide is Glycerol-3-phosphate acyltransferase (Myxococcus xanthus (strain DK1622)).